Here is a 46-residue protein sequence, read N- to C-terminus: Peroxidase 1 (46 aa).

This sequence belongs to the peroxidase family. Classical plant (class III) peroxidase subfamily. Heme b is required as a cofactor. It depends on Ca(2+) as a cofactor.

It localises to the secreted. The catalysed reaction is 2 a phenolic donor + H2O2 = 2 a phenolic radical donor + 2 H2O. Its function is as follows. Removal of H(2)O(2), oxidation of toxic reductants, biosynthesis and degradation of lignin, suberization, auxin catabolism, response to environmental stresses such as wounding, pathogen attack and oxidative stress. These functions might be dependent on each isozyme/isoform in each plant tissue. In Catharanthus roseus (Madagascar periwinkle), this protein is Peroxidase 1.